The sequence spans 125 residues: Glycine cleavage system H protein (125 aa).

The 83-residue stretch at 23–105 (VSTVGITEHA…FEGGWLFKVR (83 aa)) folds into the Lipoyl-binding domain. Lys64 is modified (N6-lipoyllysine).

The protein belongs to the GcvH family. The glycine cleavage system is composed of four proteins: P, T, L and H. (R)-lipoate is required as a cofactor.

The glycine cleavage system catalyzes the degradation of glycine. The H protein shuttles the methylamine group of glycine from the P protein to the T protein. The chain is Glycine cleavage system H protein from Streptomyces coelicolor (strain ATCC BAA-471 / A3(2) / M145).